A 781-amino-acid chain; its full sequence is Aconitate hydratase, mitochondrial (781 aa).

A mitochondrion-targeting transit peptide spans methionine 1 to cysteine 27. Position 28 is a pyrrolidone carboxylic acid (glutamine 28). N6-succinyllysine is present on lysine 31. Lysine 50 is subject to N6-acetyllysine; alternate. Position 50 is an N6-succinyllysine; alternate (lysine 50). Position 99 (glutamine 99) interacts with substrate. 2 positions are modified to N6-acetyllysine; alternate: lysine 138 and lysine 144. N6-succinyllysine; alternate occurs at positions 138 and 144. Aspartate 192–histidine 194 serves as a coordination point for substrate. Lysine 233 carries the N6-acetyllysine; alternate modification. Residue lysine 233 is modified to N6-succinyllysine; alternate. Position 385 (cysteine 385) interacts with [4Fe-4S] cluster. Lysine 411 carries the post-translational modification N6-succinyllysine. The [4Fe-4S] cluster site is built by cysteine 448 and cysteine 451. 2 residues coordinate substrate: arginine 474 and arginine 479. 2 positions are modified to N6-acetyllysine; alternate: lysine 517 and lysine 523. 2 positions are modified to N6-succinyllysine; alternate: lysine 517 and lysine 523. Over residues leucine 524–phenylalanine 537 the composition is skewed to basic and acidic residues. The disordered stretch occupies residues leucine 524–threonine 561. Lysine 549 is modified (N6-succinyllysine). Residues serine 551–threonine 561 show a composition bias toward polar residues. The residue at position 559 (serine 559) is a Phosphoserine. The residue at position 573 (lysine 573) is an N6-acetyllysine; alternate. An N6-succinyllysine; alternate modification is found at lysine 573. N6-succinyllysine is present on residues lysine 577 and lysine 591. Lysine 605 carries the N6-acetyllysine; alternate modification. At lysine 605 the chain carries N6-succinyllysine; alternate. Substrate is bound at residue arginine 607. Lysine 628 is subject to N6-succinyllysine. The residue at position 670 (serine 670) is a Phosphoserine. Serine 670 to arginine 671 contributes to the substrate binding site. Residue lysine 689 is modified to N6-succinyllysine. An N6-acetyllysine; alternate mark is found at lysine 723 and lysine 730. 2 positions are modified to N6-succinyllysine; alternate: lysine 723 and lysine 730. N6-acetyllysine is present on residues lysine 736, lysine 739, and lysine 743.

This sequence belongs to the aconitase/IPM isomerase family. Monomer. [4Fe-4S] cluster serves as cofactor. In terms of processing, forms covalent cross-links mediated by transglutaminase TGM2, between a glutamine and the epsilon-amino group of a lysine residue, forming homopolymers and heteropolymers.

Its subcellular location is the mitochondrion. It carries out the reaction citrate = D-threo-isocitrate. Its pathway is carbohydrate metabolism; tricarboxylic acid cycle; isocitrate from oxaloacetate: step 2/2. In terms of biological role, catalyzes the isomerization of citrate to isocitrate via cis-aconitate. This chain is Aconitate hydratase, mitochondrial (ACO2), found in Sus scrofa (Pig).